The following is a 509-amino-acid chain: Lysine--tRNA ligase (509 aa).

Positions 418 and 425 each coordinate Mg(2+).

The protein belongs to the class-II aminoacyl-tRNA synthetase family. In terms of assembly, homodimer. The cofactor is Mg(2+).

It is found in the cytoplasm. The catalysed reaction is tRNA(Lys) + L-lysine + ATP = L-lysyl-tRNA(Lys) + AMP + diphosphate. This Acinetobacter baylyi (strain ATCC 33305 / BD413 / ADP1) protein is Lysine--tRNA ligase (lysS).